Here is a 38-residue protein sequence, read N- to C-terminus: Photosystem II reaction center protein L (38 aa).

A helical transmembrane segment spans residues 17 to 37 (SLYWGLLCIFVLAILFSSYFF).

Belongs to the PsbL family. PSII is composed of 1 copy each of membrane proteins PsbA, PsbB, PsbC, PsbD, PsbE, PsbF, PsbH, PsbI, PsbJ, PsbK, PsbL, PsbM, PsbT, PsbX, PsbY, PsbZ, Psb30/Ycf12, at least 3 peripheral proteins of the oxygen-evolving complex and a large number of cofactors. It forms dimeric complexes.

Its subcellular location is the plastid. The protein resides in the chloroplast thylakoid membrane. Functionally, one of the components of the core complex of photosystem II (PSII). PSII is a light-driven water:plastoquinone oxidoreductase that uses light energy to abstract electrons from H(2)O, generating O(2) and a proton gradient subsequently used for ATP formation. It consists of a core antenna complex that captures photons, and an electron transfer chain that converts photonic excitation into a charge separation. This subunit is found at the monomer-monomer interface and is required for correct PSII assembly and/or dimerization. This is Photosystem II reaction center protein L from Cyanidioschyzon merolae (strain NIES-3377 / 10D) (Unicellular red alga).